A 365-amino-acid chain; its full sequence is Probable dual-specificity RNA methyltransferase RlmN (365 aa).

The Proton acceptor role is filled by glutamate 108. A Radical SAM core domain is found at 114 to 352; that stretch reads YPDRNTVCIS…SCTVRDTRGR (239 aa). A disulfide bridge connects residues cysteine 121 and cysteine 358. [4Fe-4S] cluster-binding residues include cysteine 128, cysteine 132, and cysteine 135. Residues 179–180, serine 213, 236–238, and asparagine 315 contribute to the S-adenosyl-L-methionine site; these read GE and SLH. The active-site S-methylcysteine intermediate is the cysteine 358.

This sequence belongs to the radical SAM superfamily. RlmN family. The cofactor is [4Fe-4S] cluster.

The protein localises to the cytoplasm. The enzyme catalyses adenosine(2503) in 23S rRNA + 2 reduced [2Fe-2S]-[ferredoxin] + 2 S-adenosyl-L-methionine = 2-methyladenosine(2503) in 23S rRNA + 5'-deoxyadenosine + L-methionine + 2 oxidized [2Fe-2S]-[ferredoxin] + S-adenosyl-L-homocysteine. It catalyses the reaction adenosine(37) in tRNA + 2 reduced [2Fe-2S]-[ferredoxin] + 2 S-adenosyl-L-methionine = 2-methyladenosine(37) in tRNA + 5'-deoxyadenosine + L-methionine + 2 oxidized [2Fe-2S]-[ferredoxin] + S-adenosyl-L-homocysteine. Specifically methylates position 2 of adenine 2503 in 23S rRNA and position 2 of adenine 37 in tRNAs. This is Probable dual-specificity RNA methyltransferase RlmN from Mycolicibacterium vanbaalenii (strain DSM 7251 / JCM 13017 / BCRC 16820 / KCTC 9966 / NRRL B-24157 / PYR-1) (Mycobacterium vanbaalenii).